The following is a 261-amino-acid chain: Proteasome assembly chaperone 2 (261 aa).

Belongs to the PSMG2 family. Forms a heterodimer with psmg1. Degraded by the proteasome upon completion of 20S proteasome maturation.

Its subcellular location is the nucleus. Chaperone protein which promotes assembly of the 20S proteasome as part of a heterodimer with psmg1. This chain is Proteasome assembly chaperone 2, found in Xenopus tropicalis (Western clawed frog).